Here is a 367-residue protein sequence, read N- to C-terminus: Alanine racemase (367 aa).

Residue Lys35 is the Proton acceptor; specific for D-alanine of the active site. Position 35 is an N6-(pyridoxal phosphate)lysine (Lys35). Arg130 provides a ligand contact to substrate. Tyr259 serves as the catalytic Proton acceptor; specific for L-alanine. Met307 provides a ligand contact to substrate.

It belongs to the alanine racemase family. Pyridoxal 5'-phosphate serves as cofactor.

The catalysed reaction is L-alanine = D-alanine. It functions in the pathway amino-acid biosynthesis; D-alanine biosynthesis; D-alanine from L-alanine: step 1/1. In terms of biological role, catalyzes the interconversion of L-alanine and D-alanine. May also act on other amino acids. The sequence is that of Alanine racemase (alr) from Delftia acidovorans (strain DSM 14801 / SPH-1).